The primary structure comprises 285 residues: Inositol oxygenase (285 aa).

Position 29 (R29) interacts with substrate. Phosphoserine is present on S33. Residue 85-87 (DES) coordinates substrate. Fe cation-binding residues include H98, H123, and D124. Substrate contacts are provided by residues K127 and 141–142 (GD). Fe cation is bound by residues H194, H220, and D253. Residue 220-221 (HS) participates in substrate binding.

This sequence belongs to the myo-inositol oxygenase family. It depends on Fe cation as a cofactor.

It is found in the cytoplasm. The enzyme catalyses myo-inositol + O2 = D-glucuronate + H2O + H(+). It functions in the pathway polyol metabolism; myo-inositol degradation into D-glucuronate; D-glucuronate from myo-inositol: step 1/1. The sequence is that of Inositol oxygenase (MIOX) from Pongo abelii (Sumatran orangutan).